We begin with the raw amino-acid sequence, 123 residues long: Large ribosomal subunit protein bL12 (123 aa).

It belongs to the bacterial ribosomal protein bL12 family. As to quaternary structure, homodimer. Part of the ribosomal stalk of the 50S ribosomal subunit. Forms a multimeric L10(L12)X complex, where L10 forms an elongated spine to which 2 to 4 L12 dimers bind in a sequential fashion. Binds GTP-bound translation factors.

Its function is as follows. Forms part of the ribosomal stalk which helps the ribosome interact with GTP-bound translation factors. Is thus essential for accurate translation. This chain is Large ribosomal subunit protein bL12, found in Burkholderia vietnamiensis (strain G4 / LMG 22486) (Burkholderia cepacia (strain R1808)).